A 58-amino-acid polypeptide reads, in one-letter code: Large ribosomal subunit protein bL32c (58 aa).

The protein belongs to the bacterial ribosomal protein bL32 family.

The protein resides in the plastid. It localises to the chloroplast. This Adiantum capillus-veneris (Maidenhair fern) protein is Large ribosomal subunit protein bL32c (rpl32).